We begin with the raw amino-acid sequence, 271 residues long: Aquaporin-11 (271 aa).

Residues 1 to 14 (MSALLGLPPEVQDT) are Cytoplasmic-facing. The chain crosses the membrane as a helical span at residues 15–35 (CISLGLMLLVVLFMGLARVIA). Topologically, residues 36-41 (RQQLHR) are lumenal. A helical transmembrane segment spans residues 42–62 (PMVHAFVLEFLATFQLCYCTH). At 63 to 76 (ELQLLSEQDSGHPT) the chain is on the cytoplasmic side. Residues 77–97 (WTLTLIYFFSLVHGLTLVGTA) form a helical membrane-spanning segment. At 98–166 (SNPCGVMMQM…NPINTDISKA (69 aa)) the chain is on the lumenal side. An NPC motif is present at residues 99 to 101 (NPC). The helical transmembrane segment at 167–187 (IIIEAICSFIFHSALLHFQEV) threads the bilayer. Residues 188–194 (RTKLRIH) are Cytoplasmic-facing. The helical transmembrane segment at 195-215 (VLAALITFLAYAGGSLTGALF) threads the bilayer. The NPA motif lies at 216-218 (NPA). Over 216 to 234 (NPALALSLHFPCFDESFYK) the chain is Lumenal. A helical transmembrane segment spans residues 235–255 (FFVVYWVAPSLGVLLMILMFS). The Cytoplasmic segment spans residues 256 to 271 (FFLPWLHNNQLSNKKE).

This sequence belongs to the MIP/aquaporin (TC 1.A.8) family. AQP11/AQP12 subfamily. Homodimer; disulfide-linked. Homotetramer. Can also form homomultimer. Post-translationally, not glycosylated. Expressed in retina specifically at retinal Mueller glial cells. Expressed in adult testis, in the elongated spermatids (ES) and in residual bodies inside Sertoli cells.

The protein localises to the endoplasmic reticulum membrane. It localises to the cytoplasmic vesicle membrane. It is found in the cell membrane. It carries out the reaction H2O(in) = H2O(out). The catalysed reaction is glycerol(in) = glycerol(out). It catalyses the reaction H2O2(out) = H2O2(in). In terms of biological role, channel protein that facilitates the transport of water, glycerol and hydrogen peroxide across membrane of cell or organelles guaranteeing intracellular homeostasis in several organes like liver, kidney and brain. In situation of stress, participates in endoplasmic reticulum (ER) homeostasis by regulating redox homeostasis through the transport of hydrogen peroxide across the endoplasmic reticulum membrane thereby regulating the oxidative stress through the NADPH oxidase 2 pathway. Plays a role by maintaining an environment suitable for translation or protein foldings in the ER lumen namely by participating in the PKD1 glycosylation processing resulting in regulation of PKD1 membrane trafficking thereby preventing the accumulation of unfolding protein in ER. Plays a role in the proximal tubule function by regulating its endosomal acidification. May play a role in postnatal kidney development. This is Aquaporin-11 from Rattus norvegicus (Rat).